Reading from the N-terminus, the 279-residue chain is PHO85 cyclin-1 (279 aa).

The region spanning 19-152 (DIIKFLTDTT…LLQLLNWDLR (134 aa)) is the Cyclin N-terminal domain. Residues 29–36 (LRVVPSSN) form a required for degradation by DMA1 region. At T39 the chain carries Phosphothreonine; by PHO85. Residue S43 is modified to Phosphoserine; by PHO85. Residues K82 and K121 each participate in a glycyl lysine isopeptide (Lys-Gly) (interchain with G-Cter in ubiquitin) cross-link.

The protein belongs to the cyclin family. PCL1,2 subfamily. In terms of assembly, forms a cyclin-CDK complex with PHO85. Interacts with HMS1, NCP1 and NPA3. Interacts with DMA1. Phosphorylated by PHO85; necessary for interaction with DMA1 and subsequent degradation. In terms of processing, ubiquitinated by E3 ubiquitin ligase DMA1 in response to nutrient condition; this targets PCL1 for destruction.

It is found in the cytoplasm. Its subcellular location is the nucleus. In terms of biological role, G1/S-specific cyclin partner of the cyclin-dependent kinase (CDK) PHO85. Essential for the control of the cell cycle at the G1/S (start) transition. The PCL1-PHO85 cyclin-CDK holoenzyme is involved in phosphorylation of the CDK inhibitor (CKI) SIC1, which is required for its ubiquitination and degradation, releasing repression of b-type cyclins and promoting exit from mitosis. Together with cyclin PCL2, positively controls degradation of sphingoid long chain base kinase LCB4. PCL1-PHO85 phosphorylates LCB4, which is required for its ubiquitination and degradation. PCL1-PHO85 also phosphorylates HMS1, NCP1 and NPA3, which may all have a role in mitotic exit. This Saccharomyces cerevisiae (strain ATCC 204508 / S288c) (Baker's yeast) protein is PHO85 cyclin-1.